A 340-amino-acid polypeptide reads, in one-letter code: Replication factor C subunit 2 (340 aa).

59–66 (GSPGTGKT) contacts ATP.

It belongs to the activator 1 small subunits family. As to quaternary structure, heteropentamer of subunits rfc1, rfc2, rfc3, rfc4 and rfc5 that forms a complex (RFC) with PCNA in the presence of ATP. Two other complexes exist where rfc1 can be replaced by either ctf18 or elg1 to form the ctf18-RFC or the elg1-RFC complexes respectively.

It is found in the nucleus. Functionally, the elongation of primed DNA templates by DNA polymerase delta and epsilon requires the action of the accessory proteins PCNA and activator 1. Subunit 2 binds ATP and single-stranded DNA. The polypeptide is Replication factor C subunit 2 (rfc2) (Schizosaccharomyces pombe (strain 972 / ATCC 24843) (Fission yeast)).